The chain runs to 446 residues: Probable D-serine dehydratase (446 aa).

At Lys-116 the chain carries N6-(pyridoxal phosphate)lysine.

It belongs to the serine/threonine dehydratase family. DsdA subfamily. Pyridoxal 5'-phosphate is required as a cofactor.

The catalysed reaction is D-serine = pyruvate + NH4(+). In Bacillus thuringiensis subsp. konkukian (strain 97-27), this protein is Probable D-serine dehydratase.